Reading from the N-terminus, the 1201-residue chain is Vitamin B12-dependent ribonucleotide reductase (1201 aa).

Residues serine 153, 198-199 (AC), glycine 230, 482-486 (NPCSE), and 683-687 (PTGTI) contribute to the substrate site. Cysteine 199 and cysteine 495 are oxidised to a cystine. Asparagine 482 (proton acceptor) is an active-site residue. The Cysteine radical intermediate role is filled by cysteine 484. Residue glutamate 486 is the Proton acceptor of the active site. Positions 1100–1118 (DEIGSKRATAESNGQEKET) are enriched in basic and acidic residues. The interval 1100-1120 (DEIGSKRATAESNGQEKETLS) is disordered.

It belongs to the ribonucleoside diphosphate reductase class-2 family. The cofactor is adenosylcob(III)alamin.

The enzyme catalyses a 2'-deoxyribonucleoside 5'-diphosphate + [thioredoxin]-disulfide + H2O = a ribonucleoside 5'-diphosphate + [thioredoxin]-dithiol. Its function is as follows. Catalyzes the reduction of ribonucleotides to deoxyribonucleotides. May function to provide a pool of deoxyribonucleotide precursors for DNA repair during oxygen limitation and/or for immediate growth after restoration of oxygen. The polypeptide is Vitamin B12-dependent ribonucleotide reductase (nrdJ) (Leptospira interrogans serogroup Icterohaemorrhagiae serovar copenhageni (strain Fiocruz L1-130)).